Consider the following 376-residue polypeptide: Alkanesulfonate monooxygenase (376 aa).

This sequence belongs to the SsuD family.

It catalyses the reaction an alkanesulfonate + FMNH2 + O2 = an aldehyde + FMN + sulfite + H2O + 2 H(+). Functionally, catalyzes the desulfonation of aliphatic sulfonates. The polypeptide is Alkanesulfonate monooxygenase (Bacillus licheniformis (strain ATCC 14580 / DSM 13 / JCM 2505 / CCUG 7422 / NBRC 12200 / NCIMB 9375 / NCTC 10341 / NRRL NRS-1264 / Gibson 46)).